Reading from the N-terminus, the 248-residue chain is 14-3-3 protein (248 aa).

Coiled coils occupy residues 13–33 and 91–111; these read MAQL…MRKI and RQKI…LLQE. Residue 135 to 136 coordinates O-phospho-L-serine; it reads RY. A Phosphothreonine modification is found at T214. The short motif at 237-248 is the Putative polyglycylation target motif (T/G)X0-1(D/E)X1-3-G(D/E)X1-2(gE)2-4, where X is polar or negatively charged amino acid, and gE is polyglycylated glutamine element; sequence TDSAGDDNAEEK. E246 is subject to 5-glutamyl polyglycine.

Belongs to the 14-3-3 family. Homodimer. Homodimerizes via N-terminal domains. Oligomerizes forming homotrimers, homotetramers and protein filaments. Oligomerization is hindered by polyglycylation in vivo. Interacts with a large number of both cytosolic and membrane proteins in trophozoites and encysting parasites. Interacts with a serine/threonine protein kinase GL50803_112076 (gCDC7). Component of a multiprotein complex containing gCDC7 and GL50803_94117 (gDBF4), a regulatory subunit of gCDC7, during both the trophozoite and encysting stages of the parasite. Interacts with fructose-bisphosphate aldolase GL50803_11043 (gFBA), pyruvate kinase GL50803_17143 (gPyk), acetyl-CoA synthetase GL50803_13608 (gACS), protein kinase GL50803_22165 (gSTE), DEAD box RNA helicase GL50803_34684 (gVASA) and Golgi/cell cycle associated protein GL50803_17472 (gGCCA). Interacts with actin. Interacts with both monomeric phosphorylated and unphosphorylated actin. The interaction is enhanced by phosphorylation of actin and inhibited by Rho GTPase Rac. Phosphorylated constitutively throughout the life cycle. Phosphorylation is very high in trophozoites and encysting cells of 12 hours. Phosphorylated during excystation. Phosphorylation promotes its binding to various target proteins and is critical for encystation process. Phosphorylation modification is not influenced by polyglycylation modification. Post-translationally, polyglycylated on a glutamate residue, resulting in polyglycine chain on the gamma-carboxyl group. Polyglycylated by the tubulin--tyrosine ligase-like protein GL50803_8456 (gTTLL3). The polyglycine chain is shortened by metallopeptidases of the M20 family, namely dipeptidases GL50803_15832 (gDIP1) and GL50803_8407 (gDIP2). The length of the polyglycine chain is developmental stage-dependent. In trophozoites, glycine residues range from 10 to 31, with the greatest occurrence of 21 residues. In 12 hour encystation stage, glycine residues range from 6 to 22, with the greatest occurrence of 10 residues. The differential rate of polyglycylation/deglycylation during the encystation process regulates the intracellular localization of this protein. Relocalizes partially from the cytoplasm inside the nuclei following the shortening of the polyglycine chain in encysting cells. Polyglycylation modification is not influenced by phosphorylation modification. Polyglycylation prevents oligomerization in vivo.

It localises to the cytoplasm. The protein localises to the cytoskeleton. The protein resides in the nucleus. It is found in the cell projection. Its subcellular location is the cilium. It localises to the flagellum. The protein localises to the spindle. The protein resides in the nucleus envelope. It is found in the endoplasmic reticulum. Functionally, adapter protein implicated in the regulation of a large spectrum of both general and specialized signaling pathways. Binds to a large number of partners, usually by recognition of a phosphoserine or phosphothreonine motif. Binding generally results in the modulation of the activity of the binding partner. Binds with varying affinity to various synthetic phosphopeptides having a consensus binding motif RSX(pS/pT)XP, called mode-1, where X is any residue and pS/pT is a phosphorylated serine/threonine, and to synthetic phosphopeptides having a consensus binding motif Xp(S/T)X1-2-COOH, called mode-3, in which the phosphorylated residue occupies the penultimate C-terminal position in the target protein, but does not bind to their unphosphorylated counterparts. Binds to synthetic human RAF1 phosphopeptides, but not to their unphosphorylated forms. Binds to difopein, a polypeptide containing a phosphorylation-independent binding motif. Involved in encystation. Involved in cell proliferation. Required for actin and tubulin cytoskeletal organization. Regulates actin filament formation and nuclear size. The chain is 14-3-3 protein from Giardia intestinalis (strain ATCC 50803 / WB clone C6) (Giardia lamblia).